A 308-amino-acid polypeptide reads, in one-letter code: uncharacterized protein (308 aa).

Positions 5–236 (LELQQLKKTY…LKSETFILDL (232 aa)) constitute an ABC transporter domain. 38–45 (GPNGAGKS) lines the ATP pocket.

Belongs to the ABC transporter superfamily.

This is an uncharacterized protein from Escherichia coli (strain K12).